Reading from the N-terminus, the 394-residue chain is 1-deoxy-D-xylulose 5-phosphate reductoisomerase (394 aa).

Thr-10, Gly-11, Ser-12, Ile-13, Gly-38, Arg-39, Asn-40, and Asn-123 together coordinate NADPH. Lys-124 provides a ligand contact to 1-deoxy-D-xylulose 5-phosphate. Glu-125 lines the NADPH pocket. Residue Asp-149 coordinates Mn(2+). 1-deoxy-D-xylulose 5-phosphate-binding residues include Ser-150, Glu-151, Ser-175, and His-198. Glu-151 contributes to the Mn(2+) binding site. NADPH is bound at residue Gly-204. The 1-deoxy-D-xylulose 5-phosphate site is built by Ser-211, Asn-216, Lys-217, and Glu-220. A Mn(2+)-binding site is contributed by Glu-220.

Belongs to the DXR family. It depends on Mg(2+) as a cofactor. Mn(2+) serves as cofactor.

The catalysed reaction is 2-C-methyl-D-erythritol 4-phosphate + NADP(+) = 1-deoxy-D-xylulose 5-phosphate + NADPH + H(+). The protein operates within isoprenoid biosynthesis; isopentenyl diphosphate biosynthesis via DXP pathway; isopentenyl diphosphate from 1-deoxy-D-xylulose 5-phosphate: step 1/6. Catalyzes the NADPH-dependent rearrangement and reduction of 1-deoxy-D-xylulose-5-phosphate (DXP) to 2-C-methyl-D-erythritol 4-phosphate (MEP). This is 1-deoxy-D-xylulose 5-phosphate reductoisomerase from Cereibacter sphaeroides (strain ATCC 17025 / ATH 2.4.3) (Rhodobacter sphaeroides).